We begin with the raw amino-acid sequence, 329 residues long: Serine dehydratase-like (329 aa).

Met1 is modified (N-acetylmethionine). Lys48 is subject to N6-(pyridoxal phosphate)lysine.

This sequence belongs to the serine/threonine dehydratase family. In terms of assembly, monomer. Homodimer. Pyridoxal 5'-phosphate serves as cofactor. Abundantly expressed in liver.

The enzyme catalyses L-serine = pyruvate + NH4(+). It carries out the reaction L-threonine = 2-oxobutanoate + NH4(+). It catalyses the reaction L-glutamate = D-glutamate. Catalyzes the pyridoxal-phosphate-dependent dehydrative deamination of L-threonine and L-serine to ammonia and alpha-ketobutyrate and pyruvate, respectively. Also exhibits racemase activity towards L-glutamate and D-glutamate. The sequence is that of Serine dehydratase-like (Sdsl) from Mus musculus (Mouse).